The following is a 389-amino-acid chain: ATP-dependent (S)-NAD(P)H-hydrate dehydratase (389 aa).

The region spanning 53-389 (TLQLVRNIIP…RGGGRLPQAL (337 aa)) is the YjeF C-terminal domain. Tyr85 bears the Phosphotyrosine mark. Residues Glu153 and 205–211 (NHMEFSR) contribute to the (6S)-NADPHX site. ATP-binding positions include 245–249 (KGERD) and 264–273 (GSSRRCGGQG). Residue Asp274 participates in (6S)-NADPHX binding. Disordered regions lie at residues 316–350 (KTRA…PGGC) and 369–389 (RSLH…PQAL).

It belongs to the NnrD/CARKD family. Mg(2+) serves as cofactor.

Its subcellular location is the mitochondrion. The catalysed reaction is (6S)-NADHX + ATP = ADP + phosphate + NADH + H(+). It carries out the reaction (6S)-NADPHX + ATP = ADP + phosphate + NADPH + H(+). Catalyzes the dehydration of the S-form of NAD(P)HX at the expense of ATP, which is converted to ADP. Together with NAD(P)HX epimerase, which catalyzes the epimerization of the S- and R-forms, the enzyme allows the repair of both epimers of NAD(P)HX, a damaged form of NAD(P)H that is a result of enzymatic or heat-dependent hydration. The sequence is that of ATP-dependent (S)-NAD(P)H-hydrate dehydratase from Macaca mulatta (Rhesus macaque).